The primary structure comprises 129 residues: UPF0102 protein amb4503 (129 aa).

This sequence belongs to the UPF0102 family.

This chain is UPF0102 protein amb4503, found in Paramagnetospirillum magneticum (strain ATCC 700264 / AMB-1) (Magnetospirillum magneticum).